The sequence spans 447 residues: Exodeoxyribonuclease 7 large subunit (447 aa).

This sequence belongs to the XseA family. In terms of assembly, heterooligomer composed of large and small subunits.

The protein localises to the cytoplasm. The enzyme catalyses Exonucleolytic cleavage in either 5'- to 3'- or 3'- to 5'-direction to yield nucleoside 5'-phosphates.. Bidirectionally degrades single-stranded DNA into large acid-insoluble oligonucleotides, which are then degraded further into small acid-soluble oligonucleotides. In Geobacter sulfurreducens (strain ATCC 51573 / DSM 12127 / PCA), this protein is Exodeoxyribonuclease 7 large subunit.